Consider the following 270-residue polypeptide: UBX domain-containing protein 8 (270 aa).

A topological domain (cytoplasmic) is located at residue Met1. The helical transmembrane segment at 2 to 22 (ASRGVVGIFFLSAVPLVCLEL) threads the bilayer. Residues 23 to 33 (RRGIPDIGIKD) are Lumenal-facing. Residues 34-54 (FLLLCGRILLLLALLTLIISV) traverse the membrane as a helical segment. The Cytoplasmic segment spans residues 55–270 (TTSWLNSFKS…LILEEKEQTN (216 aa)). The interval 130–171 (SGHKLGGDEGTSQTSFETSNREAAKSQNLPKPLTEFPSPAEQ) is disordered. At Ser167 the chain carries Phosphoserine. Residues 187–263 (TAEEVVTVAL…GITVDTVLIL (77 aa)) form the UBX domain.

Interacts with SYVN1 and VCP. Expressed abundantly in ovary and testis, and weakly in all other tissues tested.

It localises to the endoplasmic reticulum membrane. Its function is as follows. Involved in endoplasmic reticulum-associated degradation (ERAD) for misfolded lumenal proteins, possibly by tethering VCP to the endoplasmic reticulum membrane. May play a role in reproduction. The polypeptide is UBX domain-containing protein 8 (UBXN8) (Homo sapiens (Human)).